The primary structure comprises 102 residues: snRNA-activating protein complex subunit 5 (102 aa).

Polar residues predominate over residues 73-82 (QTTLKLSTRS). A disordered region spans residues 73 to 102 (QTTLKLSTRSPMEEEEEEEEEEEEEEESDS). Over residues 85–102 (EEEEEEEEEEEEEEESDS) the composition is skewed to acidic residues.

In terms of assembly, part of the SNAPc complex composed of 5 subunits: SNAPC1, SNAPC2, SNAPC3, SNAPC4 and SNAPC5. SNAPC5 interacts with SNAPC4.

Its subcellular location is the nucleus. Its function is as follows. Part of the SNAPc complex required for the transcription of both RNA polymerase II and III small-nuclear RNA genes. Binds to the proximal sequence element (PSE), a non-TATA-box basal promoter element common to these 2 types of genes. Recruits TBP and BRF2 to the U6 snRNA TATA box. The protein is snRNA-activating protein complex subunit 5 of Mus musculus (Mouse).